The following is a 166-amino-acid chain: Coiled-coil domain-containing protein 12 (166 aa).

M1 carries the post-translational modification N-acetylmethionine. Residues 8-28 (VGRLEEEALRRKERLKALREK) are a coiled coil. Over residues 21–53 (RLKALREKTGRKDREDGEPQTKQLREEGEEVGK) the composition is skewed to basic and acidic residues. The disordered stretch occupies residues 21–55 (RLKALREKTGRKDREDGEPQTKQLREEGEEVGKHR). K53 is modified (N6-acetyllysine). K94 is covalently cross-linked (Glycyl lysine isopeptide (Lys-Gly) (interchain with G-Cter in SUMO2)). Residues 115-144 (DLKRDVAKKLEKLEKRTQRAIAELIRERLK) are a coiled coil. Residues 146–166 (QEDSLASAVDATTGQEACDSD) are disordered. Residues S149 and S165 each carry the phosphoserine modification.

The polypeptide is Coiled-coil domain-containing protein 12 (Ccdc12) (Mus musculus (Mouse)).